We begin with the raw amino-acid sequence, 1390 residues long: ATPase family AAA domain-containing protein 2 (1390 aa).

The interval arginine 40–lysine 63 is disordered. Low complexity predominate over residues alanine 42–glycine 57. Residues serine 60 and serine 61 each carry the phosphoserine modification. Residue lysine 125 forms a Glycyl lysine isopeptide (Lys-Gly) (interchain with G-Cter in SUMO2) linkage. Residues serine 165 and serine 170 each carry the phosphoserine modification. Residues leucine 216–arginine 380 are disordered. The segment covering lysine 223–glutamate 232 has biased composition (basic and acidic residues). Positions serine 244 to glutamate 288 are enriched in acidic residues. Residue lysine 317 forms a Glycyl lysine isopeptide (Lys-Gly) (interchain with G-Cter in SUMO2) linkage. Serine 327, serine 337, serine 342, and serine 410 each carry phosphoserine. Glycine 467–threonine 474 is a binding site for ATP. Phosphoserine occurs at positions 746 and 751. Coiled-coil stretches lie at residues leucine 970–arginine 994 and tyrosine 1086–glycine 1112. Residues glutamate 980–glutamate 1092 enclose the Bromo domain. The tract at residues histidine 1124–lysine 1163 is disordered. Lysine 1128 participates in a covalent cross-link: Glycyl lysine isopeptide (Lys-Gly) (interchain with G-Cter in SUMO2). The segment covering glycine 1135–lysine 1148 has biased composition (basic and acidic residues). Serine 1139 is modified (phosphoserine). Lysine 1148 participates in a covalent cross-link: Glycyl lysine isopeptide (Lys-Gly) (interchain with G-Cter in SUMO2). A phosphothreonine mark is found at threonine 1149, threonine 1152, and threonine 1176. The span at threonine 1149–alanine 1160 shows a compositional bias: polar residues. A disordered region spans residues arginine 1181–asparagine 1242. Over residues glutamine 1185–serine 1200 the composition is skewed to basic and acidic residues. A phosphoserine mark is found at serine 1200, serine 1233, and serine 1235. Residues glutamine 1229–asparagine 1242 are compositionally biased toward polar residues. Lysine 1236 is covalently cross-linked (Glycyl lysine isopeptide (Lys-Gly) (interchain with G-Cter in SUMO2)). Serine 1243 and serine 1302 each carry phosphoserine. Threonine 1323 bears the Phosphothreonine mark.

This sequence belongs to the AAA ATPase family. In terms of assembly, interacts with ESR1 and NCOA3 and these interactions are enhanced by estradiol. Interacts with acetylated lysine residues on histone H1.4, H2A, H2B and H3 (in vitro). Highly expressed in estrogen receptor positive breast tumors and in osteosarcoma tumors.

It is found in the nucleus. The catalysed reaction is ATP + H2O = ADP + phosphate + H(+). Its function is as follows. May be a transcriptional coactivator of the nuclear receptor ESR1 required to induce the expression of a subset of estradiol target genes, such as CCND1, MYC and E2F1. May play a role in the recruitment or occupancy of CREBBP at some ESR1 target gene promoters. May be required for histone hyperacetylation. Involved in the estrogen-induced cell proliferation and cell cycle progression of breast cancer cells. This chain is ATPase family AAA domain-containing protein 2 (ATAD2), found in Homo sapiens (Human).